A 160-amino-acid polypeptide reads, in one-letter code: Putative antiporter subunit mnhE2 (160 aa).

3 consecutive transmembrane segments (helical) span residues 23 to 43 (FKFTTFFAGFLIGLIVIYILH), 55 to 75 (IWVAIKFLAVYLYQLITSSIS), and 100 to 120 (SNWAITFLTILIIITPGSTVI).

The protein belongs to the CPA3 antiporters (TC 2.A.63) subunit E family. As to quaternary structure, may form a heterooligomeric complex that consists of seven subunits: mnhA2, mnhB2, mnhC2, mnhD2, mnhE2, mnhF2 and mnhG2.

Its subcellular location is the cell membrane. The polypeptide is Putative antiporter subunit mnhE2 (mnhE2) (Staphylococcus epidermidis (strain ATCC 35984 / DSM 28319 / BCRC 17069 / CCUG 31568 / BM 3577 / RP62A)).